Here is a 445-residue protein sequence, read N- to C-terminus: MVRMEDIISLAKRKGFVFQSSEVYGGLSGVWDYGPLGIELKENIKREWWKSMVYLHENIVGLDSAIFMRSEIWKASGHIDGFSDSMVDCKDCKSRFRADFVDLSKNCPNCKVGNNFTSPRNFNLMFKTHIGVVEDSSSEIYLRPETAQGIFVNFRNVLDSSRLKIPFGIAQVGKAFRNEIVAKNFIFRTCEFEQMEMQFFVHPKQIDEWFCYWQQNRMNFFIETLKIRPDRLRLKAHNSTELAHYAKSAFDIEYEFPFGFQEIEGIHNRGNYDLTQHSKFSNNSKVFEYHDLLTKERYVPYVIETSAGLTRSVLMTLCDAYSEEELSDGDKRIVLRLHPKLAPYKIAIFPLVKKVELVEVARRIYVELCDDFHIFYDDSGTIGKRYRRQDEIGTPYCVTVDYNTIEDETVTVRERNNMTQKRIFINDLYSYIKTEILNYKEDVNK.

Residues Arg97 and Glu145 each coordinate substrate. ATP is bound by residues 177-179 (RNE), 187-192 (FRTCEF), 262-263 (EI), and 308-311 (GLTR). Residue 192–196 (FEQME) coordinates substrate. Substrate is bound at residue 304–308 (ETSAG).

It belongs to the class-II aminoacyl-tRNA synthetase family. In terms of assembly, homodimer.

It is found in the cytoplasm. The enzyme catalyses tRNA(Gly) + glycine + ATP = glycyl-tRNA(Gly) + AMP + diphosphate. In terms of biological role, catalyzes the attachment of glycine to tRNA(Gly). The sequence is that of Glycine--tRNA ligase from Borreliella afzelii (strain PKo) (Borrelia afzelii).